Consider the following 130-residue polypeptide: Serum amyloid A-4 protein (130 aa).

An N-terminal signal peptide occupies residues 1 to 18 (MRLFTGIVFCSLVMGVTS). An N-linked (GlcNAc...) asparagine; partial glycan is attached at asparagine 94. The interval 101 to 130 (DSKSNEKAEEWGRSGKDPDRFRPDGLPKKY) is disordered.

The protein belongs to the SAA family. In terms of assembly, apolipoprotein of the HDL complex. In terms of tissue distribution, expressed by the liver; secreted in plasma.

It is found in the secreted. In terms of biological role, major acute phase reactant. This chain is Serum amyloid A-4 protein, found in Homo sapiens (Human).